A 479-amino-acid chain; its full sequence is Deoxyribodipyrimidine photo-lyase (479 aa).

The region spanning 6–137 (SLKAVWFRRD…PFYTFEDAYL (132 aa)) is the Photolyase/cryptochrome alpha/beta domain. Position 229 (tyrosine 229) interacts with FAD. Arginine 233 serves as a coordination point for DNA. FAD is bound by residues 241 to 245 (TSRLS) and 278 to 285 (ELAWRDFY). Interaction with DNA stretches follow at residues 278–285 (ELAWRDFY) and 344–345 (NR). 375–377 (DYD) serves as a coordination point for FAD. Glutamine 407 lines the DNA pocket.

It belongs to the DNA photolyase class-1 family. As to quaternary structure, monomer. The cofactor is FAD. It depends on (6R)-5,10-methylene-5,6,7,8-tetrahydrofolate as a cofactor.

It carries out the reaction cyclobutadipyrimidine (in DNA) = 2 pyrimidine residues (in DNA).. Involved in repair of UV radiation-induced DNA damage. Catalyzes the light-dependent monomerization (300-600 nm) of cyclobutyl pyrimidine dimers (in cis-syn configuration), which are formed between adjacent bases on the same DNA strand upon exposure to ultraviolet radiation. This Alkalihalophilus pseudofirmus (strain ATCC BAA-2126 / JCM 17055 / OF4) (Bacillus pseudofirmus) protein is Deoxyribodipyrimidine photo-lyase (phr).